The chain runs to 653 residues: Dual specificity protein kinase shkB (653 aa).

Residues 112–133 (NPNNNNNNSNNTNSSDSNQNYS) form a disordered region. The Protein kinase domain occupies 174 to 432 (YNREAKLGSG…FAEISKQRIL (259 aa)). Residues 180 to 188 (LGSGAFGSV) and K201 each bind ATP. D298 functions as the Proton acceptor in the catalytic mechanism. Residues 534 to 625 (GFMAATSSKN…IKEPFEGGPF (92 aa)) enclose the SH2 domain.

It belongs to the protein kinase superfamily. TKL Ser/Thr protein kinase family. SH2 domain-containing protein kinase subfamily.

Its subcellular location is the membrane. It carries out the reaction L-seryl-[protein] + ATP = O-phospho-L-seryl-[protein] + ADP + H(+). It catalyses the reaction L-threonyl-[protein] + ATP = O-phospho-L-threonyl-[protein] + ADP + H(+). Functionally, required for proper chemotaxis and phagocytosis; proper spatiotemporal control of F-actin levels in chemotaxing cells. Negative regulator of the PI3K (phosphatidylinositol 3 kinase) pathway. Predominantly phosphorylates serines and threonines and tyrosines at a lower level. This is Dual specificity protein kinase shkB (shkB) from Dictyostelium discoideum (Social amoeba).